The primary structure comprises 696 residues: Golgi integral membrane protein 4 (696 aa).

A lipid anchor (N-myristoyl glycine) is attached at Gly2. The Cytoplasmic segment spans residues 2 to 12 (GNGMCSRKQKR). Residues 13–33 (IFQTLLLLTVVFGFLYGAMLY) form a helical; Signal-anchor for type II membrane protein membrane-spanning segment. The Lumenal segment spans residues 34-696 (YELQTQLRKA…AEKSHRRAEM (663 aa)). A coiled-coil region spans residues 35–244 (ELQTQLRKAE…KQLKDTLNRI (210 aa)). A golgi targeting region spans residues 38–107 (TQLRKAEAVA…ETLNKGRQDS (70 aa)). An endosome targeting region spans residues 80-175 (LEHKKAKEDF…QELSKLKETV (96 aa)). Disordered regions lie at residues 122–145 (KSQH…QGED), 244–391 (IPSL…HARA), and 427–696 (LREH…RAEM). Residues 123–145 (SQHEELKKQHSDLEEEHRKQGED) are compositionally biased toward basic and acidic residues. The segment at 176 to 248 (YNLREENRQL…DTLNRIPSLR (73 aa)) is golgi targeting. Positions 254–269 (EQQNVTQVAHSPQGYN) are enriched in polar residues. The N-linked (GlcNAc...) asparagine glycan is linked to Asn257. Basic and acidic residues-rich tracts occupy residues 271–281 (AREKPTREVQE), 298–313 (RAED…KEAE), 324–343 (EVER…RKAL), 355–364 (EHLEEEHDPS), and 370–380 (REWKEQHEQRE). Phosphoserine is present on Ser364. Over residues 436–453 (QQRLQGHLLRQQEQQQQQ) the composition is skewed to low complexity. Basic and acidic residues-rich tracts occupy residues 464–476 (AELE…HQEQ) and 505–545 (AYER…RAAV). The residue at position 538 (Ser538) is a Phosphoserine. Over residues 604 to 626 (QQEDNVDEQYQEEAEEEVQEDLT) the composition is skewed to acidic residues. At Tyr613 the chain carries Phosphotyrosine. Position 626 is a phosphothreonine (Thr626). Composition is skewed to basic and acidic residues over residues 627–638 (EEKKRELEHNAE) and 661–672 (RDDNRPKGREEH). Tyr673 is modified (phosphotyrosine). Acidic residues predominate over residues 673–683 (YEEEEEEEEDG).

This sequence belongs to the GOLIM4 family. Post-translationally, phosphorylated probably by c-AMP-dependent kinases in its lumenal part. In terms of processing, O-glycosylated; modified by sialic acid residues. N-glycosylated; N-glycans are probably of the complex type and modified by sialic acid residues.

It localises to the golgi apparatus. The protein resides in the golgi stack membrane. It is found in the endosome membrane. Its subcellular location is the membrane. Its function is as follows. Plays a role in endosome to Golgi protein trafficking; mediates protein transport along the late endosome-bypass pathway from the early endosome to the Golgi. In Homo sapiens (Human), this protein is Golgi integral membrane protein 4 (GOLIM4).